We begin with the raw amino-acid sequence, 205 residues long: tRNA (pseudouridine(54)-N(1))-methyltransferase (205 aa).

S-adenosyl-L-methionine-binding positions include Leu136, Gly156, Leu179 to Leu184, and Cys189.

It belongs to the methyltransferase superfamily. TrmY family. In terms of assembly, homodimer.

It is found in the cytoplasm. It carries out the reaction pseudouridine(54) in tRNA + S-adenosyl-L-methionine = N(1)-methylpseudouridine(54) in tRNA + S-adenosyl-L-homocysteine + H(+). In terms of biological role, specifically catalyzes the N1-methylation of pseudouridine at position 54 (Psi54) in tRNAs. This is tRNA (pseudouridine(54)-N(1))-methyltransferase from Methanocaldococcus jannaschii (strain ATCC 43067 / DSM 2661 / JAL-1 / JCM 10045 / NBRC 100440) (Methanococcus jannaschii).